We begin with the raw amino-acid sequence, 155 residues long: Endoribonuclease YbeY (155 aa).

The Zn(2+) site is built by H114, H118, and H124.

Belongs to the endoribonuclease YbeY family. Zn(2+) is required as a cofactor.

The protein resides in the cytoplasm. Functionally, single strand-specific metallo-endoribonuclease involved in late-stage 70S ribosome quality control and in maturation of the 3' terminus of the 16S rRNA. This is Endoribonuclease YbeY from Escherichia coli O157:H7.